Here is a 1193-residue protein sequence, read N- to C-terminus: Stress response protein nst1 (1193 aa).

Disordered regions lie at residues 1–197, 288–368, 422–468, 508–815, 857–942, 966–988, and 1145–1193; these read MVPA…SHNI, QGSF…TRAA, ESLH…EQRM, MEEE…MVAR, MPPG…TQRD, TLSQ…RASF, and DNNS…PMGF. Low complexity predominate over residues 10–29; it reads SPSSTMLNSSSTTAHAAPST. Residues 53–63 are compositionally biased toward basic residues; sequence NRKKQKRRQKQ. Low complexity predominate over residues 64–73; that stretch reads AARLAERQLA. Polar residues predominate over residues 76-90; that stretch reads HVSTDDTTQNGSSHA. The segment covering 91–128 has biased composition (basic and acidic residues); the sequence is NPERYHSDDGGADGPDHEQPTNGDVYDKDGQDSMDAHV. A compositionally biased stretch (polar residues) spans 129-140; the sequence is DSQNPQGPNGTE. Positions 146-160 are enriched in basic residues; the sequence is TGRKSKKKKGKKARN. The span at 169 to 182 shows a compositional bias: low complexity; that stretch reads TSTPMSTPSVSMSH. Residues 312 to 321 show a composition bias toward polar residues; that stretch reads GQHTRTQGQF. Acidic residues-rich tracts occupy residues 332-364 and 434-463; these read TEED…EDEE and DDED…DAMT. A coiled-coil region spans residues 448 to 659; the sequence is SQEEEDYEED…EEQAKKDTAK (212 aa). Composition is skewed to basic and acidic residues over residues 508 to 527 and 537 to 675; these read MEEE…EAQK and QAKE…DQAK. Over residues 722 to 740 the composition is skewed to low complexity; it reads RQPSQQDSHSSSPHSQAPS. Over residues 741 to 769 the composition is skewed to polar residues; it reads TDPSQASLSPRSMPVSQSSGVASGNSQQG. Residues 914 to 926 are compositionally biased toward low complexity; that stretch reads PISRPSPIKRPSS. Positions 933–942 are enriched in basic and acidic residues; sequence KGGDRTTQRD. Residues 972–986 are compositionally biased toward low complexity; sequence PGATAPGTFPGPARA. The segment covering 1182 to 1193 has biased composition (polar residues); it reads VLRQYSSPPMGF.

This sequence belongs to the NST1 family.

Its subcellular location is the cytoplasm. May act as a negative regulator of salt tolerance. The polypeptide is Stress response protein nst1 (nst1) (Neosartorya fischeri (strain ATCC 1020 / DSM 3700 / CBS 544.65 / FGSC A1164 / JCM 1740 / NRRL 181 / WB 181) (Aspergillus fischerianus)).